Consider the following 506-residue polypeptide: Cobyric acid synthase (506 aa).

The GATase cobBQ-type domain maps to 251-448 (DITIAIVQLP…LHGLFDSDAF (198 aa)). Cysteine 332 functions as the Nucleophile in the catalytic mechanism. Histidine 440 is an active-site residue.

It belongs to the CobB/CobQ family. CobQ subfamily.

The protein operates within cofactor biosynthesis; adenosylcobalamin biosynthesis. In terms of biological role, catalyzes amidations at positions B, D, E, and G on adenosylcobyrinic A,C-diamide. NH(2) groups are provided by glutamine, and one molecule of ATP is hydrogenolyzed for each amidation. This is Cobyric acid synthase from Salmonella heidelberg (strain SL476).